A 341-amino-acid polypeptide reads, in one-letter code: Farnesyl pyrophosphate synthase (341 aa).

3 residues coordinate isopentenyl diphosphate: K48, R51, and Q86. Residues D93 and D97 each coordinate Mg(2+). Residue R102 participates in dimethylallyl diphosphate binding. R103 contacts isopentenyl diphosphate. Residues K190, T191, Q229, and K246 each contribute to the dimethylallyl diphosphate site.

Belongs to the FPP/GGPP synthase family. Mg(2+) is required as a cofactor.

It is found in the cytoplasm. The enzyme catalyses isopentenyl diphosphate + dimethylallyl diphosphate = (2E)-geranyl diphosphate + diphosphate. It catalyses the reaction isopentenyl diphosphate + (2E)-geranyl diphosphate = (2E,6E)-farnesyl diphosphate + diphosphate. It functions in the pathway isoprenoid biosynthesis; farnesyl diphosphate biosynthesis; farnesyl diphosphate from geranyl diphosphate and isopentenyl diphosphate: step 1/1. Its pathway is isoprenoid biosynthesis; geranyl diphosphate biosynthesis; geranyl diphosphate from dimethylallyl diphosphate and isopentenyl diphosphate: step 1/1. Catalyzes the sequential condensation of isopentenyl pyrophosphate with the allylic pyrophosphates, dimethylallyl pyrophosphate, and then with the resultant geranylpyrophosphate to the ultimate product farnesyl pyrophosphate. The sequence is that of Farnesyl pyrophosphate synthase (FPS1) from Helianthus annuus (Common sunflower).